A 300-amino-acid polypeptide reads, in one-letter code: Probable protein phosphatase 2C 2 (300 aa).

The 276-residue stretch at 23–298 (IFAASEMQGW…DNMTTILVYL (276 aa)) folds into the PPM-type phosphatase domain. Positions 57, 58, 237, and 289 each coordinate Mn(2+).

The protein belongs to the PP2C family. The cofactor is Mg(2+). Mn(2+) serves as cofactor.

Its subcellular location is the membrane. It carries out the reaction O-phospho-L-seryl-[protein] + H2O = L-seryl-[protein] + phosphate. It catalyses the reaction O-phospho-L-threonyl-[protein] + H2O = L-threonyl-[protein] + phosphate. Enzyme with a broad specificity. This chain is Probable protein phosphatase 2C 2, found in Paramecium tetraurelia.